The sequence spans 186 residues: ATP synthase subunit delta, cyanelle (186 aa).

The protein belongs to the ATPase delta chain family. As to quaternary structure, F-type ATPases have 2 components, F(1) - the catalytic core - and F(0) - the membrane proton channel. F(1) has five subunits: alpha(3), beta(3), gamma(1), delta(1), epsilon(1). CF(0) has four main subunits: a(1), b(1), b'(1) and c(10-14). The alpha and beta chains form an alternating ring which encloses part of the gamma chain. F(1) is attached to F(0) by a central stalk formed by the gamma and epsilon chains, while a peripheral stalk is formed by the delta, b and b' chains.

The protein localises to the plastid. It is found in the cyanelle thylakoid membrane. Functionally, f(1)F(0) ATP synthase produces ATP from ADP in the presence of a proton or sodium gradient. F-type ATPases consist of two structural domains, F(1) containing the extramembraneous catalytic core and F(0) containing the membrane proton channel, linked together by a central stalk and a peripheral stalk. During catalysis, ATP synthesis in the catalytic domain of F(1) is coupled via a rotary mechanism of the central stalk subunits to proton translocation. In terms of biological role, this protein is part of the stalk that links CF(0) to CF(1). It either transmits conformational changes from CF(0) to CF(1) or is implicated in proton conduction. This Cyanophora paradoxa protein is ATP synthase subunit delta, cyanelle.